Here is a 330-residue protein sequence, read N- to C-terminus: tRNA-modifying protein YgfZ (330 aa).

Positions 28 and 190 each coordinate folate.

This sequence belongs to the tRNA-modifying YgfZ family.

Its subcellular location is the cytoplasm. In terms of biological role, folate-binding protein involved in regulating the level of ATP-DnaA and in the modification of some tRNAs. It is probably a key factor in regulatory networks that act via tRNA modification, such as initiation of chromosomal replication. In Yersinia pseudotuberculosis serotype O:1b (strain IP 31758), this protein is tRNA-modifying protein YgfZ.